A 76-amino-acid polypeptide reads, in one-letter code: Small ribosomal subunit protein bS16 (76 aa).

Belongs to the bacterial ribosomal protein bS16 family.

The polypeptide is Small ribosomal subunit protein bS16 (Sulfurovum sp. (strain NBC37-1)).